A 175-amino-acid polypeptide reads, in one-letter code: MAEVHVIGQIIGATGFSESSLFCKWGIHTGAAWKLLSGVREGQTQVDTPQIGDMAYWSHPIDLHFATKGLQGWPRLHLQVWSQDSFGRCQLAGYGFCHVPSSPGTHQLDCPTWRPLGSWREQLARAFVGGGPQLLHADTIYSGADRYRLHTAAGGTVHLGIGLLLRHFDRYGVEC.

The C2 B9-type domain occupies 2 to 118 (AEVHVIGQII…DCPTWRPLGS (117 aa)).

The protein belongs to the B9D family. In terms of assembly, part of the tectonic-like complex (also named B9 complex). Interacts with TUBG1. In terms of tissue distribution, highest expression in thymus and skeletal muscle. Also expressed in spleen, kidney, lung, heart, microglia and liver. Detected in brain (at protein level).

It is found in the cytoplasm. Its subcellular location is the cytoskeleton. The protein localises to the cilium basal body. It localises to the cilium axoneme. The protein resides in the nucleus. Component of the tectonic-like complex, a complex localized at the transition zone of primary cilia and acting as a barrier that prevents diffusion of transmembrane proteins between the cilia and plasma membranes. This Mus musculus (Mouse) protein is B9 domain-containing protein 2 (B9d2).